Here is a 280-residue protein sequence, read N- to C-terminus: MKLAFDDFLNSMSETNTTLDYFTDFDKVKKNVAQIEIHLNQLNYLLGKDDLKQAVYDLYAECPNAFSILEILIAVRKKEQKKSLDEKGQVVTLNSYFQSADKIIDFLNNTGLADVFRDKNIKNLVDYVFGIEVGLDTNARKNRGGDNMSKAVQLLFDNADIYYKKEVRNTIFTDIESLGADVKQFDFVIKTKRKTYVIETNYYNSGGSKLNEVARAYTDVAPKINQYSQYEFVWITDGQGWKTAKNKLQEAYTHIPSVYNLYTLHGFIEQLNSEGVIKDW.

Belongs to the DpnII type II restriction endonuclease family.

The catalysed reaction is Endonucleolytic cleavage of DNA to give specific double-stranded fragments with terminal 5'-phosphates.. In terms of biological role, a P subtype restriction enzyme that recognizes the double-stranded unmethylated sequence 5'-GATC-3' and cleaves before G-1. The protein is Type II restriction enzyme MboI (mboIR) of Moraxella bovis.